We begin with the raw amino-acid sequence, 101 residues long: Protamine-3 (101 aa).

The segment at Met-1–Ser-101 is disordered. Over residues Glu-45–Gln-67 the composition is skewed to acidic residues. Ser-93 carries the post-translational modification Phosphoserine.

It belongs to the protamine P3 family. As to expression, testis.

The protein resides in the nucleus. The protein localises to the chromosome. In terms of biological role, protamines substitute for histones in the chromatin of sperm during the haploid phase of spermatogenesis. They compact sperm DNA into a highly condensed, stable and inactive complex. This Mus musculus (Mouse) protein is Protamine-3 (Prm3).